A 138-amino-acid chain; its full sequence is Small ribosomal subunit protein uS11 (138 aa).

Residues 1–12 (MAPKKPGAAGPK) show a composition bias toward low complexity. Disordered regions lie at residues 1–27 (MAPK…NVPH) and 119–138 (ISDV…RRRV). Residues 13–22 (KAQKTRRREK) are compositionally biased toward basic residues.

Belongs to the universal ribosomal protein uS11 family. In terms of assembly, part of the 30S ribosomal subunit. Interacts with proteins S7 and S18. Binds to IF-3.

Located on the platform of the 30S subunit, it bridges several disparate RNA helices of the 16S rRNA. Forms part of the Shine-Dalgarno cleft in the 70S ribosome. The polypeptide is Small ribosomal subunit protein uS11 (Mycobacteroides abscessus (strain ATCC 19977 / DSM 44196 / CCUG 20993 / CIP 104536 / JCM 13569 / NCTC 13031 / TMC 1543 / L948) (Mycobacterium abscessus)).